The following is a 413-amino-acid chain: Cardiolipin synthase B (413 aa).

2 consecutive PLD phosphodiesterase domains span residues 108–135 (VFRRMHRKIVVIDARIAFIGGLNYSAEH) and 285–312 (RRRPLHGKVALMDDHWATVGSSNLDPLS). Catalysis depends on residues His113, Lys115, Asp120, His290, Lys292, and Asp297. Residues 390–413 (VDPPAQPTMETQDRVETENTGVKP) form a disordered region.

The protein belongs to the phospholipase D family. Cardiolipin synthase subfamily. ClsB sub-subfamily.

It localises to the cell membrane. The enzyme catalyses 2 a 1,2-diacyl-sn-glycero-3-phospho-(1'-sn-glycerol) = a cardiolipin + glycerol. Catalyzes the phosphatidyl group transfer from one phosphatidylglycerol molecule to another to form cardiolipin (CL) (diphosphatidylglycerol) and glycerol. The chain is Cardiolipin synthase B from Escherichia coli O157:H7.